The following is a 498-amino-acid chain: Fascin-3 (498 aa).

It belongs to the fascin family. As to expression, expressed in testis.

It localises to the cytoplasm. The protein resides in the cytoskeleton. In terms of biological role, acts as an actin bundling protein. This is Fascin-3 (Fscn3) from Mus musculus (Mouse).